The primary structure comprises 134 residues: Fatty acid-binding protein, muscle (134 aa).

(9Z)-octadecenoate contacts are provided by residues Arg-109 and 129–131 (RIY).

Belongs to the calycin superfamily. Fatty-acid binding protein (FABP) family. As to quaternary structure, monomer. In terms of tissue distribution, adult flight muscle.

Its subcellular location is the cytoplasm. Functionally, binds fatty acids in a 1:1 molar ratio. The protein is Fatty acid-binding protein, muscle of Schistocerca gregaria (Desert locust).